The sequence spans 129 residues: uncharacterized protein (129 aa).

Residues 5 to 25 traverse the membrane as a helical segment; sequence IIGLTLAFFVLFLTAVAILFT.

It localises to the membrane. This is an uncharacterized protein from Mycoplasma pneumoniae (strain ATCC 29342 / M129 / Subtype 1) (Mycoplasmoides pneumoniae).